Reading from the N-terminus, the 358-residue chain is Peptide chain release factor 1 (358 aa).

N5-methylglutamine is present on glutamine 234.

The protein belongs to the prokaryotic/mitochondrial release factor family. Post-translationally, methylated by PrmC. Methylation increases the termination efficiency of RF1.

The protein resides in the cytoplasm. In terms of biological role, peptide chain release factor 1 directs the termination of translation in response to the peptide chain termination codons UAG and UAA. The polypeptide is Peptide chain release factor 1 (Akkermansia muciniphila (strain ATCC BAA-835 / DSM 22959 / JCM 33894 / BCRC 81048 / CCUG 64013 / CIP 107961 / Muc)).